The chain runs to 85 residues: Large ribosomal subunit protein eL34 (85 aa).

Belongs to the eukaryotic ribosomal protein eL34 family.

This chain is Large ribosomal subunit protein eL34, found in Saccharolobus islandicus (strain M.16.27) (Sulfolobus islandicus).